The following is a 215-amino-acid chain: Thiamine-phosphate synthase (215 aa).

4-amino-2-methyl-5-(diphosphooxymethyl)pyrimidine contacts are provided by residues 43–47 (QFRDK) and Asn-78. Asp-79 and Asp-98 together coordinate Mg(2+). Ser-117 contacts 4-amino-2-methyl-5-(diphosphooxymethyl)pyrimidine. 143–145 (TNS) provides a ligand contact to 2-[(2R,5Z)-2-carboxy-4-methylthiazol-5(2H)-ylidene]ethyl phosphate. Lys-146 provides a ligand contact to 4-amino-2-methyl-5-(diphosphooxymethyl)pyrimidine. 2-[(2R,5Z)-2-carboxy-4-methylthiazol-5(2H)-ylidene]ethyl phosphate is bound by residues Gly-174 and 194 to 195 (IS).

Belongs to the thiamine-phosphate synthase family. Requires Mg(2+) as cofactor.

The catalysed reaction is 2-[(2R,5Z)-2-carboxy-4-methylthiazol-5(2H)-ylidene]ethyl phosphate + 4-amino-2-methyl-5-(diphosphooxymethyl)pyrimidine + 2 H(+) = thiamine phosphate + CO2 + diphosphate. The enzyme catalyses 2-(2-carboxy-4-methylthiazol-5-yl)ethyl phosphate + 4-amino-2-methyl-5-(diphosphooxymethyl)pyrimidine + 2 H(+) = thiamine phosphate + CO2 + diphosphate. It carries out the reaction 4-methyl-5-(2-phosphooxyethyl)-thiazole + 4-amino-2-methyl-5-(diphosphooxymethyl)pyrimidine + H(+) = thiamine phosphate + diphosphate. It functions in the pathway cofactor biosynthesis; thiamine diphosphate biosynthesis; thiamine phosphate from 4-amino-2-methyl-5-diphosphomethylpyrimidine and 4-methyl-5-(2-phosphoethyl)-thiazole: step 1/1. Its function is as follows. Condenses 4-methyl-5-(beta-hydroxyethyl)thiazole monophosphate (THZ-P) and 2-methyl-4-amino-5-hydroxymethyl pyrimidine pyrophosphate (HMP-PP) to form thiamine monophosphate (TMP). This chain is Thiamine-phosphate synthase, found in Lactococcus lactis subsp. lactis (strain IL1403) (Streptococcus lactis).